The following is a 388-amino-acid chain: Lipid-A-disaccharide synthase (388 aa).

The protein belongs to the LpxB family.

The enzyme catalyses a lipid X + a UDP-2-N,3-O-bis[(3R)-3-hydroxyacyl]-alpha-D-glucosamine = a lipid A disaccharide + UDP + H(+). It functions in the pathway bacterial outer membrane biogenesis; LPS lipid A biosynthesis. Functionally, condensation of UDP-2,3-diacylglucosamine and 2,3-diacylglucosamine-1-phosphate to form lipid A disaccharide, a precursor of lipid A, a phosphorylated glycolipid that anchors the lipopolysaccharide to the outer membrane of the cell. This is Lipid-A-disaccharide synthase from Burkholderia pseudomallei (strain 1710b).